Reading from the N-terminus, the 707-residue chain is Ribosomal RNA large subunit methyltransferase K/L (707 aa).

Residues 44–155 form the THUMP domain; it reads VIYNLCLWSR…NDILTVSFDL (112 aa).

Belongs to the methyltransferase superfamily. RlmKL family.

It localises to the cytoplasm. It carries out the reaction guanosine(2445) in 23S rRNA + S-adenosyl-L-methionine = N(2)-methylguanosine(2445) in 23S rRNA + S-adenosyl-L-homocysteine + H(+). It catalyses the reaction guanosine(2069) in 23S rRNA + S-adenosyl-L-methionine = N(2)-methylguanosine(2069) in 23S rRNA + S-adenosyl-L-homocysteine + H(+). In terms of biological role, specifically methylates the guanine in position 2445 (m2G2445) and the guanine in position 2069 (m7G2069) of 23S rRNA. The protein is Ribosomal RNA large subunit methyltransferase K/L of Legionella pneumophila (strain Lens).